A 436-amino-acid chain; its full sequence is Succinyl-CoA:glutarate CoA-transferase (436 aa).

The N-terminal 8 residues, M1 to A8, are a transit peptide targeting the mitochondrion. The Nucleophile role is filled by D203. 2 positions are modified to N6-acetyllysine: K392 and K423.

This sequence belongs to the CoA-transferase III family.

The protein resides in the mitochondrion. It carries out the reaction glutarate + succinyl-CoA = glutaryl-CoA + succinate. It catalyses the reaction 3-hydroxy-3-methylglutarate + succinyl-CoA = (3S)-3-hydroxy-3-methylglutaryl-CoA + succinate. The enzyme catalyses 3-hydroxy-3-methylglutarate + glutaryl-CoA = (3S)-3-hydroxy-3-methylglutaryl-CoA + glutarate. The catalysed reaction is hexanedioate + glutaryl-CoA = hexanedioyl-CoA + glutarate. It carries out the reaction itaconate + glutaryl-CoA = itaconyl-CoA + glutarate. It catalyses the reaction itaconate + succinyl-CoA = itaconyl-CoA + succinate. In terms of biological role, coenzyme A (CoA) transferase that reversibly catalyzes the transfer of a CoA moiety from a dicarboxyl-CoA to a dicarboxylate in a metabolite recycling process. Displays preference for succinyl-CoA and glutarate-CoA as dicarboxyl-CoA donors and glutarate, succinate, adipate/hexanedioate, itaconate and 3-hydroxy-3-methylglutarate as dicarboxylate acceptors. Acts on intermediates or end products of lysine and tryptophan degradation pathway, in particular catalyzes succinyl-CoA-dependent reesterification of free glutarate into glutaryl-CoA to prevent renal excretion of glutarate. Upon inflammation, may convert macrophage-derived itaconate to itaconyl-CoA in erythroid precursors where it negatively regulates the TCA cycle and heme synthesis to limit erythroid differentiation in the context of stress erythropoiesis. In Mus musculus (Mouse), this protein is Succinyl-CoA:glutarate CoA-transferase.